Here is a 273-residue protein sequence, read N- to C-terminus: Ribosomal RNA small subunit methyltransferase A (273 aa).

Residues asparagine 18, leucine 20, glycine 45, glutamate 66, aspartate 91, and asparagine 113 each coordinate S-adenosyl-L-methionine.

Belongs to the class I-like SAM-binding methyltransferase superfamily. rRNA adenine N(6)-methyltransferase family. RsmA subfamily.

The protein localises to the cytoplasm. The catalysed reaction is adenosine(1518)/adenosine(1519) in 16S rRNA + 4 S-adenosyl-L-methionine = N(6)-dimethyladenosine(1518)/N(6)-dimethyladenosine(1519) in 16S rRNA + 4 S-adenosyl-L-homocysteine + 4 H(+). Its function is as follows. Specifically dimethylates two adjacent adenosines (A1518 and A1519) in the loop of a conserved hairpin near the 3'-end of 16S rRNA in the 30S particle. May play a critical role in biogenesis of 30S subunits. The protein is Ribosomal RNA small subunit methyltransferase A of Escherichia coli (strain SE11).